A 139-amino-acid polypeptide reads, in one-letter code: Thioredoxin 2 (139 aa).

A zinc finger spans residues 5 to 18; sequence CTHCQAINRIPDDR. Positions 26–139 constitute a Thioredoxin domain; that stretch reads GRCGHDLFDG…PFDSWLNESL (114 aa). A disulfide bridge links cysteine 64 with cysteine 67.

Belongs to the thioredoxin family.

The protein resides in the cytoplasm. It carries out the reaction [protein]-dithiol + NAD(+) = [protein]-disulfide + NADH + H(+). The catalysed reaction is [protein]-dithiol + NADP(+) = [protein]-disulfide + NADPH + H(+). Efficient electron donor for the essential enzyme ribonucleotide reductase. Is also able to reduce the interchain disulfide bridges of insulin. The chain is Thioredoxin 2 (trxC) from Escherichia coli O6:H1 (strain CFT073 / ATCC 700928 / UPEC).